The following is a 459-amino-acid chain: LETM1 domain-containing protein LETM2, mitochondrial (459 aa).

Residues 1 to 25 constitute a mitochondrion transit peptide; sequence MAFYSYNSFLAIFWTRLPGHSVHPP. Topologically, residues 26–176 are mitochondrial intermembrane; it reads CSHFPPLAFF…LLRTCADVFR (151 aa). The segment at 88–114 is disordered; the sequence is GKPQPEQIPEEPKATDPQPTKDDQTEV. A compositionally biased stretch (basic and acidic residues) spans 97–111; sequence EEPKATDPQPTKDDQ. Residues 177–197 traverse the membrane as a helical segment; it reads LVPFVVFIIVPFMEFLIPVFL. The Mitochondrial matrix portion of the chain corresponds to 198–459; sequence KLFPDMLPST…QNSKANSKGA (262 aa). The Letm1 RBD domain occupies 220–440; that stretch reads KMMGAKLEIA…PAPQLNGTKI (221 aa). The interval 403–459 is disordered; it reads LPPSIETPKTNLGIPSSPPPESKEDITDPAPQLNGTKILQAKSQETSQNSKANSKGA. The segment covering 435-459 has biased composition (polar residues); sequence LNGTKILQAKSQETSQNSKANSKGA.

In terms of tissue distribution, testis and sperm.

It is found in the mitochondrion inner membrane. The chain is LETM1 domain-containing protein LETM2, mitochondrial (Letm2) from Rattus norvegicus (Rat).